The following is a 671-amino-acid chain: Archaeal Rqc2 homolog aRqcH (671 aa).

2 coiled-coil regions span residues 291–363 (KVVV…ARIK) and 410–465 (RKNA…MQMK).

The protein belongs to the NEMF family. As to quaternary structure, associates with stalled 50S ribosomal subunits.

Its function is as follows. Probably part of the ribosome quality control system (RQC). May mediate the addition of alanine residues (Ala tailing) to incompletely synthesized nascent chains from stalled ribosomes, leading to their degradation. This is Archaeal Rqc2 homolog aRqcH from Methanocaldococcus jannaschii (strain ATCC 43067 / DSM 2661 / JAL-1 / JCM 10045 / NBRC 100440) (Methanococcus jannaschii).